Reading from the N-terminus, the 388-residue chain is Ras-related protein Rab-26 (388 aa).

Residues 1 to 115 (MASTAVGLGG…HHHSQLSLTG (115 aa)) are disordered. Residues 7 to 21 (GLGGGEGDPGAGGPP) show a composition bias toward gly residues. Basic and acidic residues predominate over residues 47-56 (RIEELRRRPF). Low complexity predominate over residues 67 to 86 (PASVSASITTTTTQQQQQHH). Basic residues predominate over residues 87–109 (NPSHHHQSSHHQPSHHHHHHHHS). Position 197–204 (197–204 (GDSGVGKT)) interacts with GTP. The Effector region signature appears at 219 to 228 (SFSATVGIAL). Residues 246 to 250 (DTAGQ) and 304 to 307 (NKAD) contribute to the GTP site. The S-palmitoyl cysteine moiety is linked to residue Cys382. At Cys385 the chain carries Cysteine methyl ester. Cys385 carries the S-geranylgeranyl cysteine lipid modification. Positions 386-388 (RNM) are cleaved as a propeptide — removed in mature form.

This sequence belongs to the small GTPase superfamily. Rab family.

It localises to the cell membrane. Participates in exocrine secretion. This chain is Ras-related protein Rab-26, found in Drosophila melanogaster (Fruit fly).